We begin with the raw amino-acid sequence, 490 residues long: GTPase Der (490 aa).

EngA-type G domains follow at residues 3–166 and 200–373; these read PVVA…AEAM and IKLA…DSAT. GTP contacts are provided by residues 9–16, 56–60, 118–121, 206–213, 253–257, and 318–321; these read GRPNVGKS, DTGGI, NKVD, GKPNVGKS, DTAGV, and NKWD. Residues 374–458 form the KH-like domain; sequence RRVSTSMLTR…PIQLRFQEGG (85 aa). The tract at residues 470–490 is disordered; it reads TVSQERRRKRMVGHIRDKNKD.

This sequence belongs to the TRAFAC class TrmE-Era-EngA-EngB-Septin-like GTPase superfamily. EngA (Der) GTPase family. As to quaternary structure, associates with the 50S ribosomal subunit.

Its function is as follows. GTPase that plays an essential role in the late steps of ribosome biogenesis. This is GTPase Der from Shewanella pealeana (strain ATCC 700345 / ANG-SQ1).